We begin with the raw amino-acid sequence, 152 residues long: uncharacterized protein (152 aa).

A signal peptide spans 1–16; sequence MRKLLISLALAIPVFA. A Cytochrome c domain is found at 20 to 135; it reads NLLQKGYEVY…AVAYWLYHNY (116 aa). Positions 33, 36, and 37 each coordinate heme c.

This is an uncharacterized protein from Aquifex aeolicus (strain VF5).